The chain runs to 542 residues: MAAKEVRFHTEAREKMLRGVDILANAVKVTLGPKGRNVVLDKSFGAPRITKDGVTVAKEIELEDKFENMGAQMVREVASKTSDIAGDGTTTATVLAQAIVKEGAKAVASGMNPMDLKRGVDKAVDAVVEELRRNARKVTKNDEIAQVGTISANGDTEIGRFLAEAMEKVGNEGVITVEEAKTAVTELEVVEGMQFDRGYLSPYFVTNPDKMRVELEEPYVLIHEKKLSNLQALLPVLESVVQSGKPLLIIAEDVEGEALATLVVNKLRGGLKVAAVKAPGFGDRRKAMLEDIAILTGGTAISEDLGIKLENVTLDMLGRAKKVVVEKENTTIVDGAGSKTEIEGRVAQIKAQIEETTSDYDREKLQERLAKLAGGVAVIRVGGSTEVEVKERKDRVDDAMHATRAAVEEGVLPGGGVALLRAVKALDRVQTENPDQRHGIEIVRRAIEAPVRQIAENAGAEGSIIVGKLREKTEFGYGWNAQTNEFGDLFEQGVIDPVKVVRTALQDAASVAGLLITTEAMVAEKPKKEAPVPPMPPGGMDF.

ATP-binding positions include 30-33, lysine 51, 87-91, glycine 415, and aspartate 496; these read TLGP and DGTTT.

It belongs to the chaperonin (HSP60) family. Forms a cylinder of 14 subunits composed of two heptameric rings stacked back-to-back. Interacts with the co-chaperonin GroES.

It is found in the cytoplasm. The catalysed reaction is ATP + H2O + a folded polypeptide = ADP + phosphate + an unfolded polypeptide.. Together with its co-chaperonin GroES, plays an essential role in assisting protein folding. The GroEL-GroES system forms a nano-cage that allows encapsulation of the non-native substrate proteins and provides a physical environment optimized to promote and accelerate protein folding. The protein is Chaperonin GroEL 2 of Sinorhizobium fredii (strain NBRC 101917 / NGR234).